Consider the following 415-residue polypeptide: UDP-N-acetylglucosamine 1-carboxyvinyltransferase (415 aa).

22–23 (KN) provides a ligand contact to phosphoenolpyruvate. Arginine 92 contacts UDP-N-acetyl-alpha-D-glucosamine. The Proton donor role is filled by cysteine 116. The residue at position 116 (cysteine 116) is a 2-(S-cysteinyl)pyruvic acid O-phosphothioketal. Residues 121 to 125 (RPIDL), aspartate 304, and valine 326 contribute to the UDP-N-acetyl-alpha-D-glucosamine site.

Belongs to the EPSP synthase family. MurA subfamily.

Its subcellular location is the cytoplasm. It catalyses the reaction phosphoenolpyruvate + UDP-N-acetyl-alpha-D-glucosamine = UDP-N-acetyl-3-O-(1-carboxyvinyl)-alpha-D-glucosamine + phosphate. It participates in cell wall biogenesis; peptidoglycan biosynthesis. Functionally, cell wall formation. Adds enolpyruvyl to UDP-N-acetylglucosamine. The polypeptide is UDP-N-acetylglucosamine 1-carboxyvinyltransferase (Halothermothrix orenii (strain H 168 / OCM 544 / DSM 9562)).